The following is a 114-amino-acid chain: Putative antiporter subunit mnhC2 (114 aa).

3 helical membrane-spanning segments follow: residues 3 to 23, 25 to 45, and 72 to 92; these read LILLLVIGFLVFIGTYMILSI, LIRIVIGISIYTHAGNLIIMS, and AIVLTAIVIGFGMTAFLLVLI.

The protein belongs to the CPA3 antiporters (TC 2.A.63) subunit C family. As to quaternary structure, may form a heterooligomeric complex that consists of seven subunits: mnhA2, mnhB2, mnhC2, mnhD2, mnhE2, mnhF2 and mnhG2.

It is found in the cell membrane. This Staphylococcus epidermidis (strain ATCC 12228 / FDA PCI 1200) protein is Putative antiporter subunit mnhC2 (mnhC2).